We begin with the raw amino-acid sequence, 557 residues long: Vacuolar protein sorting-associated protein 30 (557 aa).

2 disordered regions span residues 93 to 149 (DDDN…ENQQ) and 218 to 238 (NKEI…SEKE). The span at 135–147 (DEEEQEATDEDEN) shows a compositional bias: acidic residues. T142 is modified (phosphothreonine). A coiled-coil region spans residues 189–322 (LINRLKSEYD…QLDKLRKINI (134 aa)). Positions 320–539 (INIFNATFKI…LAFSSNLLSK (220 aa)) are BARA. The tract at residues 515 to 540 (WTTAMKFLLTNVKWLLAFSSNLLSKS) is required for membrane-association, autophagic function during starvation and normal autophagosome morphology.

This sequence belongs to the beclin family. In terms of assembly, component of the autophagy-specific VPS34 PI3-kinase complex I composed of VPS15, VPS30, VPS34, ATG14 and ATG38; and of the VPS34 PI3-kinase complex II composed of VPS15, VPS30, VPS34 and VPS38.

It localises to the endosome membrane. The protein resides in the vacuole membrane. Its subcellular location is the preautophagosomal structure membrane. Its function is as follows. Required for cytoplasm to vacuole transport (Cvt), autophagy, nucleophagy, and mitophagy, as a part of the autophagy-specific VPS34 PI3-kinase complex I. This complex is essential to recruit the ATG8-phosphatidylinositol conjugate and the ATG12-ATG5 conjugate to the pre-autophagosomal structure. Also involved in endosome-to-Golgi retrograde transport as part of the VPS34 PI3-kinase complex II. This second complex is required for the endosome-to-Golgi retrieval of PEP1 and KEX2, and the recruitment of VPS5 and VPS7, two components of the retromer complex, to endosomal membranes (probably through the synthesis of a specific pool of phosphatidylinositol 3-phosphate recruiting the retromer to the endosomes). Also plays a role in regulation of filamentous growth. This Saccharomyces cerevisiae (strain ATCC 204508 / S288c) (Baker's yeast) protein is Vacuolar protein sorting-associated protein 30.